Reading from the N-terminus, the 516-residue chain is Cytochrome P450 93G1 (516 aa).

Residues 11 to 31 (LLGMGTTMGALALALVVVVVV) traverse the membrane as a helical segment. Cysteine 454 lines the heme pocket.

Belongs to the cytochrome P450 family. It depends on heme as a cofactor.

Its subcellular location is the membrane. The enzyme catalyses a flavanone + reduced [NADPH--hemoprotein reductase] + O2 = a flavone + oxidized [NADPH--hemoprotein reductase] + 2 H2O + H(+). It functions in the pathway secondary metabolite biosynthesis; flavonoid biosynthesis. Its function is as follows. Functions as a flavone synthase II (FNSII) that catalyzes the direct conversion of flavanones to flavones. In vitro, can convert naringenin and eriodictyol to apigenin and luteolin, respectively. Acts as a key branch point enzyme that channels flavanones to the biosynthesis of soluble tricin O-linked conjugates. This chain is Cytochrome P450 93G1, found in Oryza sativa subsp. japonica (Rice).